A 653-amino-acid chain; its full sequence is DNA mismatch repair protein MutL (653 aa).

The interval 375-425 (QNTPDYPRKAPRDNDRDESDNPQVRERAVSNPWVASPKTASTGKERYGSAS) is disordered. Over residues 380–389 (YPRKAPRDND) the composition is skewed to basic and acidic residues.

Belongs to the DNA mismatch repair MutL/HexB family.

Functionally, this protein is involved in the repair of mismatches in DNA. It is required for dam-dependent methyl-directed DNA mismatch repair. May act as a 'molecular matchmaker', a protein that promotes the formation of a stable complex between two or more DNA-binding proteins in an ATP-dependent manner without itself being part of a final effector complex. The sequence is that of DNA mismatch repair protein MutL from Vibrio cholerae serotype O1 (strain ATCC 39541 / Classical Ogawa 395 / O395).